Consider the following 492-residue polypeptide: Glycerol kinase (492 aa).

Residue Thr11 participates in ADP binding. ATP contacts are provided by Thr11 and Thr12. Residue Thr11 coordinates sn-glycerol 3-phosphate. Residue Lys15 participates in ADP binding. Residues Arg79, Glu80, Tyr129, and Asp238 each contribute to the sn-glycerol 3-phosphate site. Positions 79, 80, 129, 238, and 239 each coordinate glycerol. Positions 260, 302, 403, and 407 each coordinate ADP. 3 residues coordinate ATP: Thr260, Gly302, and Gly403.

The protein belongs to the FGGY kinase family.

The enzyme catalyses glycerol + ATP = sn-glycerol 3-phosphate + ADP + H(+). It participates in polyol metabolism; glycerol degradation via glycerol kinase pathway; sn-glycerol 3-phosphate from glycerol: step 1/1. With respect to regulation, inhibited by fructose 1,6-bisphosphate (FBP). In terms of biological role, key enzyme in the regulation of glycerol uptake and metabolism. Catalyzes the phosphorylation of glycerol to yield sn-glycerol 3-phosphate. This chain is Glycerol kinase, found in Aquifex aeolicus (strain VF5).